The chain runs to 177 residues: Large ribosomal subunit protein uL6 (177 aa).

It belongs to the universal ribosomal protein uL6 family. Part of the 50S ribosomal subunit.

This protein binds to the 23S rRNA, and is important in its secondary structure. It is located near the subunit interface in the base of the L7/L12 stalk, and near the tRNA binding site of the peptidyltransferase center. In Vibrio cholerae serotype O1 (strain ATCC 39541 / Classical Ogawa 395 / O395), this protein is Large ribosomal subunit protein uL6.